We begin with the raw amino-acid sequence, 428 residues long: Enolase (428 aa).

Gln163 contacts (2R)-2-phosphoglycerate. Glu205 acts as the Proton donor in catalysis. Mg(2+)-binding residues include Asp242, Glu286, and Asp313. Positions 338, 367, 368, and 389 each coordinate (2R)-2-phosphoglycerate. The active-site Proton acceptor is the Lys338.

This sequence belongs to the enolase family. The cofactor is Mg(2+).

The protein localises to the cytoplasm. It is found in the secreted. It localises to the cell surface. The enzyme catalyses (2R)-2-phosphoglycerate = phosphoenolpyruvate + H2O. It participates in carbohydrate degradation; glycolysis; pyruvate from D-glyceraldehyde 3-phosphate: step 4/5. In terms of biological role, catalyzes the reversible conversion of 2-phosphoglycerate (2-PG) into phosphoenolpyruvate (PEP). It is essential for the degradation of carbohydrates via glycolysis. In Geobacter sulfurreducens (strain ATCC 51573 / DSM 12127 / PCA), this protein is Enolase.